A 187-amino-acid chain; its full sequence is 3'-5' DNA exonuclease Cap18 (187 aa).

The 165-residue stretch at 9-173 (VSVDVETSGP…HDARYQAELF (165 aa)) folds into the Exonuclease domain. Residues D12, M25, H160, and D165 each coordinate Mg(2+). H160 serves as the catalytic Proton donor/acceptor.

It belongs to the Cap18 exonuclease family. In terms of assembly, homodimer.

In terms of biological role, effector component of a CBASS antivirus system. CBASS (cyclic oligonucleotide-based antiphage signaling system) provides immunity against bacteriophage. The CD-NTase protein synthesizes cyclic nucleotides in response to infection; these serve as specific second messenger signals. The signals activate a diverse range of effectors, leading to bacterial cell death and thus abortive phage infection. A type III CBASS system. A sequence non-specific 3'-5' DNA exonuclease that preferentially degrades ssDNA with 3' overhangs or a mismatch at the 3' end. Expression of this CBASS system (Cap17-CapW-CdnC-Cap7-Cap6-Cap18-Cap19) in a susceptible E.coli (strain JP313) confers resistance to bacteriophage lambda cI--. In Escherichia coli, this protein is 3'-5' DNA exonuclease Cap18.